The following is a 963-amino-acid chain: IQ motif and SEC7 domain-containing protein 1 (963 aa).

Residues 21 to 88 (SGVEGEAPSS…TRRPKLQHST (68 aa)) form a disordered region. Polar residues predominate over residues 29–38 (SSETGTSLDS). 3 positions are modified to phosphoserine: serine 89, serine 105, and serine 107. The region spanning 134 to 163 (TRHAARTIQTAFRQYQMNKNFERLRSSMSE) is the IQ domain. Serine 180, serine 249, and serine 253 each carry phosphoserine. Disordered regions lie at residues 312–332 (LSPP…ESDL) and 349–513 (KEDK…RNSW). Composition is skewed to basic and acidic residues over residues 366–376 (ERQEQRLRVEH) and 430–446 (LPRE…RPLD). The span at 471 to 489 (DSINSTSNSNDTINCSSES) shows a compositional bias: low complexity. 2 positions are modified to phosphoserine: serine 512 and serine 515. The SEC7 domain maps to 517–710 (AFSNDVIRKR…MGIYERIRKR (194 aa)). A PH domain is found at 774 to 866 (HQREIFLFND…LRESIAEVQE (93 aa)). Positions 848–879 (QDRKKFTDDLRESIAEVQEMEKHRIESELEKQ) form a coiled coil. Residue serine 892 is modified to Phosphoserine. Tyrosine 911 carries the post-translational modification Phosphotyrosine. The segment at 922-947 (LSSSLRDLSEAGKRGRRSSAGSLESN) is disordered. Residues serine 924 and serine 925 each carry the phosphoserine modification.

The protein belongs to the BRAG family. Interacts with ARF1 and ARF6. Interacts with GRIA2; the interaction is required for ARF6 activation. In terms of tissue distribution, expressed in brain, ovary, heart, lung, liver, kidney and leukocytes. Moderate expression was also detected in lung, skeletal muscle, placenta, small intestine, pancreas, spleen and testis.

Its subcellular location is the cytoplasm. The protein localises to the nucleus. It is found in the postsynaptic density. The protein resides in the cytoplasmic vesicle. It localises to the secretory vesicle. Its subcellular location is the synaptic vesicle. In terms of biological role, guanine nucleotide exchange factor for ARF1 and ARF6. Guanine nucleotide exchange factor activity is enhanced by lipid binding. Accelerates GTP binding by ARFs of all three classes. Guanine nucleotide exchange protein for ARF6, mediating internalization of beta-1 integrin. Involved in neuronal development. In neurons, plays a role in the control of vesicle formation by endocytoc cargo. Upon long term depression, interacts with GRIA2 and mediates the activation of ARF6 to internalize synaptic AMPAR receptors. This Homo sapiens (Human) protein is IQ motif and SEC7 domain-containing protein 1.